The following is a 294-amino-acid chain: N-acetylmuramic acid 6-phosphate etherase (294 aa).

The 164-residue stretch at valine 54–lysine 217 folds into the SIS domain. Glutamate 82 serves as the catalytic Proton donor. Glutamate 113 is a catalytic residue.

Belongs to the GCKR-like family. MurNAc-6-P etherase subfamily. As to quaternary structure, homodimer.

The enzyme catalyses N-acetyl-D-muramate 6-phosphate + H2O = N-acetyl-D-glucosamine 6-phosphate + (R)-lactate. It participates in amino-sugar metabolism; N-acetylmuramate degradation. In terms of biological role, specifically catalyzes the cleavage of the D-lactyl ether substituent of MurNAc 6-phosphate, producing GlcNAc 6-phosphate and D-lactate. The protein is N-acetylmuramic acid 6-phosphate etherase of Bacillus cereus (strain G9842).